A 398-amino-acid polypeptide reads, in one-letter code: Phosphoglycerate kinase (398 aa).

Residues 21-23 (DFN), R36, 59-62 (HLGR), R119, and R157 contribute to the substrate site. Residues K208, G296, E327, and 354–357 (GGDS) each bind ATP.

Belongs to the phosphoglycerate kinase family. Monomer.

Its subcellular location is the cytoplasm. It catalyses the reaction (2R)-3-phosphoglycerate + ATP = (2R)-3-phospho-glyceroyl phosphate + ADP. Its pathway is carbohydrate degradation; glycolysis; pyruvate from D-glyceraldehyde 3-phosphate: step 2/5. The polypeptide is Phosphoglycerate kinase (Lactococcus lactis subsp. cremoris (strain SK11)).